Reading from the N-terminus, the 347-residue chain is 2-hydroxyacid dehydrogenase A (347 aa).

NAD(+) contacts are provided by residues 157-158 (RI), D177, 234-236 (TSR), and D260. The active site involves R236. Residue E265 is part of the active site.

The protein belongs to the D-isomer specific 2-hydroxyacid dehydrogenase family.

The enzyme catalyses a (2R)-2-hydroxycarboxylate + NADP(+) = a 2-oxocarboxylate + NADPH + H(+). In terms of biological role, 2-hydroxyacid dehydrogenase that is capable to reduce pyruvate, hydroxypyruvate and glyoxylate in a NADPH- or NADH-dependent manner. In contrast to 2-HadhD/morA, does not recognize 4-methyl-2-oxopentanoate (MOA) as a substrate. This chain is 2-hydroxyacid dehydrogenase A, found in Aspergillus oryzae (strain ATCC 42149 / RIB 40) (Yellow koji mold).